Consider the following 126-residue polypeptide: MPTINQLIRKERQKVVKKSKSPALVSCPQRRGVCTRVYTTTPKKPNSALRKVAKVRLTSGFEVISYIMGEGHNLQEHSIVLVRGGRIKDLPGVKYHIVRGALDTAGVANRTVSRSKYGTKRPKVKK.

Asp89 is subject to 3-methylthioaspartic acid.

It belongs to the universal ribosomal protein uS12 family. In terms of assembly, part of the 30S ribosomal subunit. Contacts proteins S8 and S17. May interact with IF1 in the 30S initiation complex.

With S4 and S5 plays an important role in translational accuracy. In terms of biological role, interacts with and stabilizes bases of the 16S rRNA that are involved in tRNA selection in the A site and with the mRNA backbone. Located at the interface of the 30S and 50S subunits, it traverses the body of the 30S subunit contacting proteins on the other side and probably holding the rRNA structure together. The combined cluster of proteins S8, S12 and S17 appears to hold together the shoulder and platform of the 30S subunit. This chain is Small ribosomal subunit protein uS12, found in Sulfurimonas denitrificans (strain ATCC 33889 / DSM 1251) (Thiomicrospira denitrificans (strain ATCC 33889 / DSM 1251)).